The sequence spans 260 residues: MAIDSLINKLQYVQLEPPDKILSLYLNTDMRDPEQQGGEWKIALKSGFSRLKEYLAASDPEEEKCLDGIRAKMNQYLNAMGKDMPRSLVFFVSDSGIWEPIKLQVPVDTRFYWEETAVLDQLKGLRQTYPSTAFILTQQHEVKIIETVLGKIEAVERYEYDMINESWKNSHSAVDKAPPFEENRMREHVTENQSRLYKRLAASLDQKAAAKRWERMVIAGDKETADILDQHMNKPIHSKIQKNLLNENEHKVIEHLIKEA.

This is an uncharacterized protein from Bacillus subtilis (strain 168).